The chain runs to 379 residues: Flap endonuclease 1 (379 aa).

An N-domain region spans residues 1-105; it reads MGVKGLNQLI…GELEKRLLRR (105 aa). Position 34 (D34) interacts with Mg(2+). R47 and R71 together coordinate DNA. Mg(2+) is bound by residues D87, E159, E161, D180, and D182. The tract at residues 123-254 is I-domain; that stretch reads DMVRYEKRTV…VTAFKLIKEH (132 aa). Residue E159 coordinates DNA. DNA-binding residues include G232 and D234. D234 is a binding site for Mg(2+). The interval 341–349 is interaction with PCNA; sequence VQGRLDGFF. A disordered region spans residues 344–379; that stretch reads RLDGFFQSVPKPKDSADKKRKNDTKSAKSKKAKTRK. Over residues 361–379 the composition is skewed to basic residues; sequence KKRKNDTKSAKSKKAKTRK.

Belongs to the XPG/RAD2 endonuclease family. FEN1 subfamily. As to quaternary structure, interacts with PCNA. Three molecules of FEN1 bind to one PCNA trimer with each molecule binding to one PCNA monomer. PCNA stimulates the nuclease activity without altering cleavage specificity. Mg(2+) serves as cofactor. Phosphorylated. Phosphorylation upon DNA damage induces relocalization to the nuclear plasma.

The protein resides in the nucleus. It localises to the nucleolus. It is found in the nucleoplasm. The protein localises to the mitochondrion. In terms of biological role, structure-specific nuclease with 5'-flap endonuclease and 5'-3' exonuclease activities involved in DNA replication and repair. During DNA replication, cleaves the 5'-overhanging flap structure that is generated by displacement synthesis when DNA polymerase encounters the 5'-end of a downstream Okazaki fragment. It enters the flap from the 5'-end and then tracks to cleave the flap base, leaving a nick for ligation. Also involved in the long patch base excision repair (LP-BER) pathway, by cleaving within the apurinic/apyrimidinic (AP) site-terminated flap. Acts as a genome stabilization factor that prevents flaps from equilibrating into structures that lead to duplications and deletions. Also possesses 5'-3' exonuclease activity on nicked or gapped double-stranded DNA, and exhibits RNase H activity. Also involved in replication and repair of rDNA and in repairing mitochondrial DNA. This Debaryomyces hansenii (strain ATCC 36239 / CBS 767 / BCRC 21394 / JCM 1990 / NBRC 0083 / IGC 2968) (Yeast) protein is Flap endonuclease 1.